The primary structure comprises 452 residues: Pup--protein ligase (452 aa).

Glu9 lines the Mg(2+) pocket. Residue Arg53 participates in ATP binding. Tyr55 provides a ligand contact to Mg(2+). Asp57 functions as the Proton acceptor in the catalytic mechanism. A Mg(2+)-binding site is contributed by Glu63. 2 residues coordinate ATP: Thr66 and Trp419.

The protein belongs to the Pup ligase/Pup deamidase family. Pup-conjugating enzyme subfamily.

It carries out the reaction ATP + [prokaryotic ubiquitin-like protein]-L-glutamate + [protein]-L-lysine = ADP + phosphate + N(6)-([prokaryotic ubiquitin-like protein]-gamma-L-glutamyl)-[protein]-L-lysine.. It participates in protein degradation; proteasomal Pup-dependent pathway. It functions in the pathway protein modification; protein pupylation. Catalyzes the covalent attachment of the prokaryotic ubiquitin-like protein modifier Pup to the proteasomal substrate proteins, thereby targeting them for proteasomal degradation. This tagging system is termed pupylation. The ligation reaction involves the side-chain carboxylate of the C-terminal glutamate of Pup and the side-chain amino group of a substrate lysine. This Mycolicibacterium vanbaalenii (strain DSM 7251 / JCM 13017 / BCRC 16820 / KCTC 9966 / NRRL B-24157 / PYR-1) (Mycobacterium vanbaalenii) protein is Pup--protein ligase.